Reading from the N-terminus, the 189-residue chain is Urease accessory protein UreF (189 aa).

This sequence belongs to the UreF family. UreD, UreF and UreG form a complex that acts as a GTP-hydrolysis-dependent molecular chaperone, activating the urease apoprotein by helping to assemble the nickel containing metallocenter of UreC. The UreE protein probably delivers the nickel.

The protein localises to the cytoplasm. In terms of biological role, required for maturation of urease via the functional incorporation of the urease nickel metallocenter. The chain is Urease accessory protein UreF from Staphylococcus xylosus.